Consider the following 397-residue polypeptide: Acetyl-CoA acetyltransferase, cytosolic (397 aa).

Residue methionine 1 is modified to N-acetylmethionine. Residue cysteine 92 is the Acyl-thioester intermediate of the active site. N6-acetyllysine is present on lysine 200. Residues arginine 223 and serine 226 each coordinate CoA. N6-acetyllysine occurs at positions 233 and 235. Residue serine 252 coordinates CoA. Cysteine 383 serves as the catalytic Proton donor/acceptor.

Belongs to the thiolase-like superfamily. Thiolase family. Homotetramer.

It localises to the cytoplasm. Its subcellular location is the cytosol. The catalysed reaction is 2 acetyl-CoA = acetoacetyl-CoA + CoA. It participates in lipid metabolism; fatty acid metabolism. Involved in the biosynthetic pathway of cholesterol. The protein is Acetyl-CoA acetyltransferase, cytosolic (Acat2) of Rattus norvegicus (Rat).